Consider the following 992-residue polypeptide: Aminopeptidase Q (992 aa).

Topologically, residues 2–13 (GPPSSSGFYVSR) are cytoplasmic. A helical; Signal-anchor for type II membrane protein transmembrane segment spans residues 14 to 34 (AVALLLAALAAALLLALAVLA). Over 35–992 (ALYGRCARVQ…RMTAWLRKNT (958 aa)) the chain is Extracellular. The interval 47-92 (DLHHSGVPDAASSPRGTQEEPLPTWPPRPTREPAGTATPGHWRPPG) is disordered. N-linked (GlcNAc...) asparagine glycosylation occurs at Asn-133. Glu-241 provides a ligand contact to substrate. N-linked (GlcNAc...) asparagine glycans are attached at residues Asn-262, Asn-289, Asn-347, and Asn-361. 380-384 (SAMEN) lines the substrate pocket. His-416 is a Zn(2+) binding site. The active-site Proton acceptor is the Glu-417. Zn(2+) contacts are provided by His-420 and Glu-439. Tyr-505 serves as the catalytic Proton donor. N-linked (GlcNAc...) asparagine glycans are attached at residues Asn-555, Asn-584, Asn-602, Asn-609, Asn-655, Asn-811, Asn-850, and Asn-889.

The protein belongs to the peptidase M1 family. The cofactor is Zn(2+). Expressed in skin. Expression levels do not differ between dark and light skin areas.

It localises to the membrane. Its function is as follows. Metalloprotease which may be important for placentation by regulating biological activity of key peptides at the embryo-maternal interface. Involved in coat pigmentation patterns. During skin development, may be required to establish the periodicity of tabby markings, initiating a pre-pattern at or before hair follicle development. The sequence is that of Aminopeptidase Q (LVRN) from Felis catus (Cat).